The following is a 114-amino-acid chain: Chaperone protein YscY (114 aa).

In terms of assembly, binds to YscX.

It is found in the cytoplasm. Functionally, required for Yop secretion. Functions probably as a chaperone which stabilizes YscX within the cell, before its secretion. The polypeptide is Chaperone protein YscY (yscY) (Yersinia enterocolitica serotype O:8 / biotype 1B (strain NCTC 13174 / 8081)).